The following is a 570-amino-acid chain: Protein misato homolog 1 (570 aa).

Ser-495 is modified (phosphoserine).

This sequence belongs to the misato family.

It is found in the mitochondrion outer membrane. The protein resides in the cytoplasm. Functionally, involved in the regulation of mitochondrial distribution and morphology. Required for mitochondrial fusion and mitochondrial network formation. This is Protein misato homolog 1 (MSTO1) from Pongo pygmaeus (Bornean orangutan).